We begin with the raw amino-acid sequence, 226 residues long: Large ribosomal subunit protein uL4 (226 aa).

The tract at residues 47-74 is disordered; that stretch reads GTAKAKTRSEVSGGGRKPWPQKHTGRAR.

It belongs to the universal ribosomal protein uL4 family. In terms of assembly, part of the 50S ribosomal subunit.

One of the primary rRNA binding proteins, this protein initially binds near the 5'-end of the 23S rRNA. It is important during the early stages of 50S assembly. It makes multiple contacts with different domains of the 23S rRNA in the assembled 50S subunit and ribosome. Its function is as follows. Forms part of the polypeptide exit tunnel. The sequence is that of Large ribosomal subunit protein uL4 from Kosmotoga olearia (strain ATCC BAA-1733 / DSM 21960 / TBF 19.5.1).